We begin with the raw amino-acid sequence, 117 residues long: Minor capsid protein p17 (117 aa).

N12 carries an N-linked (GlcNAc...) asparagine; by host glycan. Residues A39 to Y59 form a helical membrane-spanning segment. Positions K96–S117 are disordered. The N-linked (GlcNAc...) asparagine; by host glycan is linked to N97.

This sequence belongs to the asfivirus minor capsid protein p17 family. In terms of assembly, interacts with the minor capsid protein M1249L and with the hexon capsid protein p72 capsomers; these interactions form a rigid zipper structure that stabilizes the capsomers. Interacts with host STING1.

The protein resides in the virion membrane. The protein localises to the host endoplasmic reticulum membrane. Its function is as follows. Together with the penton and the other minor capsid proteins (M1249L, p49), forms a complicated network immediately below the outer capsid shell, stabilizing the whole capsid. Three copies of p17 encircle each p72 capsomer in the inner capsid shell, anchoring p72 capsomers on the inner membrane. Required for the assembly of the capsid and icosahedral morphogenesis. Additionally, inhibits the host cGAS-STING pathway through its interaction with STING1 and subsequent interference of the recruitment of downstream components TBK1 and IKBKE. The sequence is that of Minor capsid protein p17 from African swine fever virus (isolate Warthog/Namibia/Wart80/1980) (ASFV).